The following is a 447-amino-acid chain: N-succinylarginine dihydrolase (447 aa).

Residues 19–28 (AGLSFGNEAS), N110, and 137–138 (HR) contribute to the substrate site. The active site involves E174. R212 contributes to the substrate binding site. Residue H248 is part of the active site. Substrate contacts are provided by D250 and N359. C365 acts as the Nucleophile in catalysis.

It belongs to the succinylarginine dihydrolase family. Homodimer.

The enzyme catalyses N(2)-succinyl-L-arginine + 2 H2O + 2 H(+) = N(2)-succinyl-L-ornithine + 2 NH4(+) + CO2. Its pathway is amino-acid degradation; L-arginine degradation via AST pathway; L-glutamate and succinate from L-arginine: step 2/5. Its function is as follows. Catalyzes the hydrolysis of N(2)-succinylarginine into N(2)-succinylornithine, ammonia and CO(2). The chain is N-succinylarginine dihydrolase from Salmonella enteritidis PT4 (strain P125109).